A 230-amino-acid polypeptide reads, in one-letter code: 6-carboxyhexanoate--CoA ligase (230 aa).

It belongs to the BioW family. In terms of assembly, homodimer. Mg(2+) serves as cofactor.

It catalyses the reaction heptanedioate + ATP + CoA = 6-carboxyhexanoyl-CoA + AMP + diphosphate. Its pathway is metabolic intermediate metabolism; pimeloyl-CoA biosynthesis; pimeloyl-CoA from pimelate: step 1/1. Its function is as follows. Catalyzes the transformation of pimelate into pimeloyl-CoA with concomitant hydrolysis of ATP to AMP. In Staphylococcus aureus (strain Mu3 / ATCC 700698), this protein is 6-carboxyhexanoate--CoA ligase.